The primary structure comprises 474 residues: UDP glycosyltransferase 9 (474 aa).

UDP-alpha-D-glucose-binding positions include S296, 349 to 350 (WC), 367 to 375 (HCGWNSTLE), and 389 to 392 (WADQ).

This sequence belongs to the UDP-glycosyltransferase family.

This is UDP glycosyltransferase 9 from Catharanthus roseus (Madagascar periwinkle).